We begin with the raw amino-acid sequence, 191 residues long: Putative inactive glutathione hydrolase 4 (191 aa).

Catalysis depends on Thr54, which acts as the Nucleophile. Residues Thr72, Asn74, Glu93, Asp96, 126-127 (SS), and 147-148 (GG) contribute to the L-glutamate site.

The protein belongs to the gamma-glutamyltransferase family. As to expression, expressed at low levels in embryo, roots and leaves. In mature plants, expression is restricted to vascular tissues of roots, leaves, flowers and siliques.

In Arabidopsis thaliana (Mouse-ear cress), this protein is Putative inactive glutathione hydrolase 4 (GGT4).